The sequence spans 77 residues: Acyl carrier protein (77 aa).

The 76-residue stretch at 2–77 folds into the Carrier domain; it reads SDIADRVKKI…DAVKFIQGAV (76 aa). Residue Ser37 is modified to O-(pantetheine 4'-phosphoryl)serine.

Belongs to the acyl carrier protein (ACP) family. In terms of processing, 4'-phosphopantetheine is transferred from CoA to a specific serine of apo-ACP by AcpS. This modification is essential for activity because fatty acids are bound in thioester linkage to the sulfhydryl of the prosthetic group.

The protein localises to the cytoplasm. It participates in lipid metabolism; fatty acid biosynthesis. In terms of biological role, carrier of the growing fatty acid chain in fatty acid biosynthesis. This is Acyl carrier protein from Paracoccus denitrificans (strain Pd 1222).